Consider the following 445-residue polypeptide: MSGIDTIWEKVLANIKHRLAPASYDTWFKETKIKVLNNHQVVIQAPTSFISEWLQTNYIDFIQEAFIEEIGEKLNIKVISSEDELMNNEKEAPVRKTQQTSQELLPNQLNTDNTFDTFVIGSGNRFSHAASLAVAEAPAKAYNPLFIYGGVGLGKTHLMHAIGHYVMEHKENAKVVYISSEKFMNEFINSIKDNKTEEFRSKYRNVDVLLIDDIQFLAGKESTQEEFFHTFNELHQNHKQIVISSDRAPKEIPTLEERLRTRFEWGLITDVTPPDLETRIAILRKKSEEENIDIPNEAMLYIATQIQSNIRELEGALTRVSAYSKLVNRELNSDLVAEALKDIIATSKPKKVTIKDIQLAVGEYYNVRLEDFSAKKRTKSIAFPRQIAMYLARELTDFSLPKIGEEFGGRDHTTVIHAHEKIKNQLETDESLKNELKNIEKDITS.

Positions 1–72 are domain I, interacts with DnaA modulators; sequence MSGIDTIWEK…QEAFIEEIGE (72 aa). The segment at 72–107 is domain II; it reads EKLNIKVISSEDELMNNEKEAPVRKTQQTSQELLPN. The segment at 108–324 is domain III, AAA+ region; the sequence is QLNTDNTFDT…GALTRVSAYS (217 aa). The ATP site is built by G152, G154, K155, and T156. The segment at 325 to 445 is domain IV, binds dsDNA; the sequence is KLVNRELNSD…LKNIEKDITS (121 aa).

The protein belongs to the DnaA family. In terms of assembly, oligomerizes as a right-handed, spiral filament on DNA at oriC.

It localises to the cytoplasm. Its function is as follows. Plays an essential role in the initiation and regulation of chromosomal replication. ATP-DnaA binds to the origin of replication (oriC) to initiate formation of the DNA replication initiation complex once per cell cycle. Binds the DnaA box (a 9 base pair repeat at the origin) and separates the double-stranded (ds)DNA. Forms a right-handed helical filament on oriC DNA; dsDNA binds to the exterior of the filament while single-stranded (ss)DNA is stabiized in the filament's interior. The ATP-DnaA-oriC complex binds and stabilizes one strand of the AT-rich DNA unwinding element (DUE), permitting loading of DNA polymerase. After initiation quickly degrades to an ADP-DnaA complex that is not apt for DNA replication. Binds acidic phospholipids. In Macrococcus caseolyticus (strain JCSC5402) (Macrococcoides caseolyticum), this protein is Chromosomal replication initiator protein DnaA.